Reading from the N-terminus, the 615-residue chain is Chaperone protein HscA (615 aa).

Belongs to the heat shock protein 70 family.

Its function is as follows. Chaperone involved in the maturation of iron-sulfur cluster-containing proteins. Has a low intrinsic ATPase activity which is markedly stimulated by HscB. Involved in the maturation of IscU. This Xenorhabdus nematophila (strain ATCC 19061 / DSM 3370 / CCUG 14189 / LMG 1036 / NCIMB 9965 / AN6) protein is Chaperone protein HscA.